Consider the following 420-residue polypeptide: Pectate lyase (420 aa).

The signal sequence occupies residues 1–21 (MKKVMLATALFLGLTPAGANA). The interval 117–139 (TWGKKEPSGTQEEARARSQKNQK) is disordered. Residues 119-132 (GKKEPSGTQEEARA) are compositionally biased toward basic and acidic residues. Ca(2+) contacts are provided by Asp205, Asp244, and Asp248. Residue Arg300 is part of the active site.

This sequence belongs to the polysaccharide lyase 1 family. As to quaternary structure, monomer. Requires Ca(2+) as cofactor.

Its subcellular location is the secreted. It catalyses the reaction Eliminative cleavage of (1-&gt;4)-alpha-D-galacturonan to give oligosaccharides with 4-deoxy-alpha-D-galact-4-enuronosyl groups at their non-reducing ends.. It functions in the pathway glycan metabolism; pectin degradation; 2-dehydro-3-deoxy-D-gluconate from pectin: step 2/5. In terms of biological role, produces unsaturated products from polygalacturonate. The sequence is that of Pectate lyase (pel) from Bacillus subtilis (strain 168).